The sequence spans 109 residues: N-alpha-acetyltransferase 38, NatC auxiliary subunit (109 aa).

A Sm domain is found at 23–101 (LARCKLENLL…VVSIEVETES (79 aa)).

This sequence belongs to the snRNP Sm proteins family. As to quaternary structure, component of the N-terminal acetyltransferase C (NatC) complex.

The protein resides in the cytoplasm. It is found in the nucleus. Auxillary component of the N-terminal acetyltransferase C (NatC) complex which catalyzes acetylation of N-terminal methionine residues. N-terminal acetylation protects proteins from ubiquitination and degradation by the N-end rule pathway. This chain is N-alpha-acetyltransferase 38, NatC auxiliary subunit (naa38), found in Danio rerio (Zebrafish).